The sequence spans 144 residues: NADH-ubiquinone oxidoreductase chain 6 (144 aa).

Transmembrane regions (helical) follow at residues 1 to 21, 25 to 45, 46 to 66, 79 to 99, and 108 to 128; these read MVKVFFVLAVLSSIISYINID, SSFFLIFSLLFSMPVISMSMH, IWFSYFICLLFLSGIFVILVY, YMAVFLLLLSMLYFSPTVLTY, and FYYSIYWFIFCFILVCLLFFM.

The protein belongs to the complex I subunit 6 family.

It localises to the mitochondrion membrane. The enzyme catalyses a ubiquinone + NADH + 5 H(+)(in) = a ubiquinol + NAD(+) + 4 H(+)(out). Its function is as follows. Core subunit of the mitochondrial membrane respiratory chain NADH dehydrogenase (Complex I) that is believed to belong to the minimal assembly required for catalysis. Complex I functions in the transfer of electrons from NADH to the respiratory chain. The immediate electron acceptor for the enzyme is believed to be ubiquinone. This Caenorhabditis elegans protein is NADH-ubiquinone oxidoreductase chain 6.